Reading from the N-terminus, the 128-residue chain is Small ribosomal subunit protein eS8 (128 aa).

Positions 1–37 are disordered; the sequence is MGYFQGNDFRKITGGKKGKHRDKRKFELGSPPTETKL. Over residues 13–23 the composition is skewed to basic residues; the sequence is TGGKKGKHRDK.

It belongs to the eukaryotic ribosomal protein eS8 family. Part of the 30S ribosomal subunit.

The chain is Small ribosomal subunit protein eS8 from Sulfurisphaera tokodaii (strain DSM 16993 / JCM 10545 / NBRC 100140 / 7) (Sulfolobus tokodaii).